The chain runs to 403 residues: Na(+)-translocating NADH-quinone reductase subunit B (403 aa).

The next 9 helical transmembrane spans lie at 56 to 76, 121 to 141, 163 to 183, 220 to 240, 258 to 278, 287 to 307, 312 to 332, 348 to 368, and 371 to 391; these read MMIT…WNTG, AYFL…EVLF, ILPP…GVVI, WTAV…AGGI, IHGS…AVLI, IVTG…LIGS, LFGM…GMIF, WVFG…NPAF, and GMML…HFVI. An FMN phosphoryl threonine modification is found at T230.

The protein belongs to the NqrB/RnfD family. In terms of assembly, composed of six subunits; NqrA, NqrB, NqrC, NqrD, NqrE and NqrF. It depends on FMN as a cofactor.

The protein resides in the cell inner membrane. It carries out the reaction a ubiquinone + n Na(+)(in) + NADH + H(+) = a ubiquinol + n Na(+)(out) + NAD(+). Its function is as follows. NQR complex catalyzes the reduction of ubiquinone-1 to ubiquinol by two successive reactions, coupled with the transport of Na(+) ions from the cytoplasm to the periplasm. NqrA to NqrE are probably involved in the second step, the conversion of ubisemiquinone to ubiquinol. The polypeptide is Na(+)-translocating NADH-quinone reductase subunit B (Stutzerimonas stutzeri (strain A1501) (Pseudomonas stutzeri)).